The following is a 702-amino-acid chain: Phosphoglycerol transferase I (702 aa).

3 helical membrane passes run W3–L25, G73–R95, and G102–Y124.

This sequence belongs to the OpgB family.

It is found in the cell inner membrane. The enzyme catalyses a phosphatidylglycerol + a membrane-derived-oligosaccharide D-glucose = a 1,2-diacyl-sn-glycerol + a membrane-derived-oligosaccharide 6-(glycerophospho)-D-glucose.. It functions in the pathway glycan metabolism; osmoregulated periplasmic glucan (OPG) biosynthesis. In terms of biological role, transfers a phosphoglycerol residue from phosphatidylglycerol to the membrane-bound nascent glucan backbones. The protein is Phosphoglycerol transferase I of Xanthomonas campestris pv. campestris (strain ATCC 33913 / DSM 3586 / NCPPB 528 / LMG 568 / P 25).